Consider the following 257-residue polypeptide: Enterotoxin type A (257 aa).

The signal sequence occupies residues 1–24; that stretch reads MKKTAFTLLLFIALTLTTSPLVNG. Cysteine 120 and cysteine 130 form a disulfide bridge. The Zn(2+) site is built by histidine 211, histidine 249, and aspartate 251.

This sequence belongs to the staphylococcal/streptococcal toxin family. Monomer. Interacts with MHC class II molecules alpha/HLA-DRB1 and beta/HLA-DRA chains. The interaction with MHC-II molecules occurs at both zinc-dependent and zinc-independent sites. Interacts with T-cell receptor beta variable 7-9/TRBV7-9. Zn(2+) is required as a cofactor.

It is found in the secreted. In terms of biological role, staphylococcal enterotoxin that activates the host immune system by binding as unprocessed molecules to major histocompatibility (MHC) complex class II and T-cell receptor (TCR) molecules. In turn, waves of cellular activation, cytokine production, and migration into the lung tissue and airways occur via alphabeta T-cells. Also causes the intoxication staphylococcal food poisoning syndrome. The illness is characterized by high fever, hypotension, diarrhea, shock, and in some cases death. This is Enterotoxin type A (entA) from Staphylococcus aureus.